The following is a 241-amino-acid chain: Fatty acid metabolism regulator protein (241 aa).

One can recognise an HTH gntR-type domain in the interval 11–79 (QSPAALAEEY…HGKPTKVNNI (69 aa)). The segment at residues 39–58 (ERDLADKIGVTRTTLREVLQ) is a DNA-binding region (H-T-H motif).

In terms of assembly, homodimer.

Its subcellular location is the cytoplasm. Functionally, multifunctional regulator of fatty acid metabolism. The chain is Fatty acid metabolism regulator protein from Haemophilus influenzae (strain ATCC 51907 / DSM 11121 / KW20 / Rd).